The following is a 278-amino-acid chain: Ribosomal protein L11 methyltransferase (278 aa).

S-adenosyl-L-methionine is bound by residues Thr131, Gly152, Asp173, and Asn214.

It belongs to the methyltransferase superfamily. PrmA family.

It localises to the cytoplasm. It catalyses the reaction L-lysyl-[protein] + 3 S-adenosyl-L-methionine = N(6),N(6),N(6)-trimethyl-L-lysyl-[protein] + 3 S-adenosyl-L-homocysteine + 3 H(+). Functionally, methylates ribosomal protein L11. This chain is Ribosomal protein L11 methyltransferase, found in Campylobacter lari (strain RM2100 / D67 / ATCC BAA-1060).